The following is a 566-amino-acid chain: Solute carrier family 2, facilitated glucose transporter member 9 (566 aa).

A disordered region spans residues 1 to 31; it reads MARKQNRNSKELGLAPLADDTSHAGPPGPGR. Residues 1 to 51 lie on the Cytoplasmic side of the membrane; it reads MARKQNRNSKELGLAPLADDTSHAGPPGPGRALLECDHLRSGLPDGRRRKD. Position 9 is a phosphoserine (Ser9). Residues 52 to 72 form a helical membrane-spanning segment; that stretch reads WSCSLLVASLAGAFGSSFLYG. The Extracellular portion of the chain corresponds to 73–107; that stretch reads YNLSVVNAPTPYIKAFYNESWERRHGRPIDPDTLT. 2 N-linked (GlcNAc...) asparagine glycosylation sites follow: Asn74 and Asn90. The helical transmembrane segment at 108-128 threads the bilayer; it reads LLWSVTVSIFAIGGLVGTLMV. The Cytoplasmic portion of the chain corresponds to 129 to 140; it reads KMIGKVLGRKHT. A helical transmembrane segment spans residues 141-161; that stretch reads LLANNGFAISAALLMACSLQA. Residues 162–171 are Extracellular-facing; the sequence is GAFEMLIVGR. The chain crosses the membrane as a helical span at residues 172-192; the sequence is FIMGIDGGIALSVLPMYLSEI. The Cytoplasmic portion of the chain corresponds to 193–200; it reads SPKEIRGS. The helical transmembrane segment at 201 to 221 threads the bilayer; sequence LGQVTAIFICIGVFTGQLLGL. The Extracellular segment spans residues 222-231; that stretch reads PELLGKESTW. The helical transmembrane segment at 232–252 threads the bilayer; it reads PYLFGVIVVPAVVQLLSLPFL. Topologically, residues 253–316 are cytoplasmic; that stretch reads PDSPRYLLLE…LRAPYVRWQV (64 aa). The helical transmembrane segment at 317–337 threads the bilayer; it reads VTVIVTMACYQLCGLNAIWFY. Residues 338 to 354 are Extracellular-facing; the sequence is TNSIFGKAGIPPAKIPY. Residues 355–375 form a helical membrane-spanning segment; that stretch reads VTLSTGGIETLAAIFSGLVIE. Residues 376–381 lie on the Cytoplasmic side of the membrane; sequence HLGRRP. The chain crosses the membrane as a helical span at residues 382–402; sequence LLIGGFGLMALFFGTLTVTLT. Residues 403 to 415 are Extracellular-facing; that stretch reads LQDRAPWVPYLSI. Residues 416-436 form a helical membrane-spanning segment; it reads VGILAIIASFCSGPGGIPFIL. Residues 437 to 451 are Cytoplasmic-facing; that stretch reads TGEFFQQSQRPAAFI. Residues 452 to 472 traverse the membrane as a helical segment; the sequence is IAGTVNWLSNFAVGLLFPFIQ. The Extracellular segment spans residues 473-478; it reads KSLDTY. The chain crosses the membrane as a helical span at residues 479-499; that stretch reads CFLVFATICMTGAIYLYFVLP. Topologically, residues 500–566 are cytoplasmic; sequence ETKNRTYAEI…YMDDLTFQET (67 aa). Ser514 carries the post-translational modification Phosphoserine. Residues 524–539 show a composition bias toward basic and acidic residues; sequence EKIDSAVTDGKTKGRP. The disordered stretch occupies residues 524-543; it reads EKIDSAVTDGKTKGRPEQVS.

It belongs to the major facilitator superfamily. Sugar transporter (TC 2.A.1.1) family.

It is found in the basolateral cell membrane. Its subcellular location is the apical cell membrane. The catalysed reaction is urate(out) = urate(in). Functionally, high-capacity urate transporter, which may play a role in the urate reabsorption by proximal tubules. May have a residual high-affinity, low-capacity glucose and fructose transporter activity. Transports urate at rates 45- to 60-fold faster than glucose. Does not transport galactose. May mediate small uptake of adenine but not of other nucleobases. The protein is Solute carrier family 2, facilitated glucose transporter member 9 of Pongo abelii (Sumatran orangutan).